The following is a 212-amino-acid chain: RNA chaperone ProQ (212 aa).

2 stretches are compositionally biased toward basic and acidic residues: residues 102 to 124 (ALKE…EKAK) and 132 to 144 (RKAD…DKPK). The interval 102–149 (ALKESKERVFASRRTNTKEEKAKQPRRPAPRKADAAAKSDKPKAAPKA) is disordered.

The protein belongs to the ProQ family.

Its subcellular location is the cytoplasm. In terms of biological role, RNA chaperone with significant RNA binding, RNA strand exchange and RNA duplexing activities. This chain is RNA chaperone ProQ, found in Aeromonas hydrophila subsp. hydrophila (strain ATCC 7966 / DSM 30187 / BCRC 13018 / CCUG 14551 / JCM 1027 / KCTC 2358 / NCIMB 9240 / NCTC 8049).